The primary structure comprises 960 residues: Anoctamin-1 (960 aa).

At 1–333 (MRVPEKYSTL…FGEKVGLYFA (333 aa)) the chain is on the cytoplasmic side. The segment at 92-115 (TRSVRQDQPLPGKGSPVDAGSPEV) is disordered. Residue Ser196 is modified to Phosphoserine. A helical transmembrane segment spans residues 334-354 (WLGAYTQMLIPASIVGVIVFL). Topologically, residues 355–406 (YGCATVDENIPSMEMCDQRYNITMCPLCDKTCSYWKMSSACATARASHLFDN) are extracellular. Disulfide bonds link Cys370–Cys395, Cys379–Cys836, Cys382–Cys386, and Cys625–Cys630. A helical transmembrane segment spans residues 407–427 (PATVFFSVFMALWAATFMEHW). Position 425 (Glu425) interacts with Ca(2+). Residues 428–493 (KRKQMRLNYR…RDRFPAYFTN (66 aa)) are Cytoplasmic-facing. A helical transmembrane segment spans residues 494-514 (LVSIIFMIAVTFAIVLGVIIY). The Extracellular portion of the chain corresponds to 515-542 (RISTAAALAMNSSPSVRSNIRVTVTATA). Residues 543–563 (VIINLVVIILLDEVYGCIARW) traverse the membrane as a helical segment. Residues 564 to 581 (LTKIEVPKTEKSFEERLT) lie on the Cytoplasmic side of the membrane. Residues 582–602 (FKAFLLKFVNSYTPIFYVAFF) form a helical membrane-spanning segment. Over 603-631 (KGRFVGRPGDYVYIFRSFRMEECAPGGCL) the chain is Extracellular. The chain crosses the membrane as a helical span at residues 632–652 (MELCIQLSIIMLGKQLIQNNL). Residues Asn651, Glu654, Glu702, Glu705, Glu734, and Asp738 each coordinate Ca(2+). Over 653-699 (FEIGIPKMKKFIRYLKLRRQSPSDREEYVKRKQRYEVDFNLEPFAGL) the chain is Cytoplasmic. The next 2 membrane-spanning stretches (helical) occupy residues 700 to 720 (TPEYMEMIIQFGFVTLFVASF) and 721 to 741 (PLAPLFALLNNIIEIRLDAKK). Residues 742–758 (FVTELRRPVAIRAKDIG) are Cytoplasmic-facing. The chain crosses the membrane as a helical span at residues 759–779 (IWYNILRGVGKLAVIINAFVI). Over 780 to 866 (SFTSDFIPRL…FWAVLAARLA (87 aa)) the chain is Extracellular. N-linked (GlcNAc...) asparagine glycosylation is present at Asn806. The chain crosses the membrane as a helical span at residues 867–887 (FVIVFQNLVMFMSDFVDWVIP). Residues Asp883 and Asp888 each coordinate Ca(2+). Over 888–960 (DIPKDISQQI…PSYEYHGDAL (73 aa)) the chain is Cytoplasmic. Residues 928–960 (PRDVPCNNHSPTTHPEAGDGSPVPSYEYHGDAL) form a disordered region.

It belongs to the anoctamin family. In terms of assembly, homodimer. Interacts with CFTR. Interacts with TRPV4. As to expression, expressed at the apical surface of the vomeronasal epithelium (at protein level). Expressed in the lateral and septal nasal glands (at protein level). Highly expressed in pulmonary bronchiole epithelial cells, pancreatic and submandibular gland acinar cells, kidney proximal tubule, all retinal cell layers, most sensory cells of dorsal root ganglia, Leydig cells and spermatocytes (at protein level). In the dorsal root ganglia, detected in small-diameter nociceptive neurons and in larger myelinated neurons (at protein level). In the dorsal root ganglia, expressed in MrgprA3-positive neurons (at protein level). In the developing brain, highly expressed in the ventricular zone and subventricular zone at 12.5 dpc and 14.5 dpc where it is detected in radial glial cells but not in neurons with expression dramatically decreased at P1 (at protein level). Highly expressed in the endometrial stroma (at protein level). In taste buds of the vallate papillae, expressed in the apical region of type I taste cells (at protein level). In the kidney, expressed in the collecting duct (at protein level). In the retina, strongly expressed in the outer and inner plexiform layers, weakly expressed in some somata in the inner nuclear layer and ganglion cell layer and not expressed in the outer nuclear layer (at protein level). Expressed in various retinal neurons including rod bipolar cells (at protein level). Expressed in eye, brain, myometrium and endometrium with higher levels in endometrium than myometrium in estrus and day 18 pregnant mice. Not detected in uterine smooth muscle cells. Expressed at high levels in the thyroid gland and gastrointestinal muscles.

It localises to the apical cell membrane. The protein resides in the presynapse. The enzyme catalyses chloride(in) = chloride(out). Its activity is regulated as follows. ATP and calmodulin are essential for its activation. Channel activity is inhibited by CFTR protein and by chloride inhibitors such as niflumic acid (NFA) and 4,4'-diisothiocyanatostilbene-2,2'-disulfonic acid (DIDS). Activated by heat with activation seen at temperatures above 44 degrees Celsius. Activated by BDNF in radial glial cells. In terms of biological role, calcium-activated chloride channel (CaCC). Plays a role in transepithelial anion transport and smooth muscle contraction. Required for the normal functioning of the interstitial cells of Cajal (ICCs) which generate electrical pacemaker activity in gastrointestinal smooth muscles. Acts as a major contributor to basal and stimulated chloride conductance in airway epithelial cells and plays an important role in tracheal cartilage development. Required for CFTR activation by enhancing endoplasmic reticulum Ca(2+) store release and is also required for CFTR membrane expression. Required for basal and ATP-dependent mucus secretion in airways and intestine, probably by controlling exocytosis of mucus-filled granules by providing Ca(2+) to an apical signaling compartment. Contributes to airway mucus expression induced by interleukins IL3 and IL8 and by the asthma-associated protein CLCA1 and is required for expression of mucin MUC5AC. However, was shown in another study not to be required for MUC5AC expression. Plays a role in the propagation of Ca(2+) waves in Kolliker's organ in the cochlea and contributes to the refinement of auditory brainstem circuitries prior to hearing onset. In vomeronasal sensory neurons, modulates spontaneous firing patterns in the absence of stimuli as well as the firing pattern of pheromone-evoked activity. Responsible for calcium-activated chloride channel activity in type I taste cells of the vallate papillae. Acts as a heat sensor in nociceptive neurons. In dorsal root ganglion neurons, plays a role in mediating non-histaminergic Mas-related G-protein coupled receptor (MRGPR)-dependent itching, acting as a downstream effector of MRGPRs. In the developing brain, required for the Ca(2+)-dependent process extension of radial glial cells. This is Anoctamin-1 (Ano1) from Mus musculus (Mouse).